Consider the following 192-residue polypeptide: Phosphoheptose isomerase (192 aa).

The SIS domain maps to L37–K192. N52–G54 is a substrate binding site. Zn(2+) is bound by residues H61 and E65. Substrate is bound by residues E65, N93–D94, S119–S121, S124, and Q172. Positions 172 and 180 each coordinate Zn(2+).

This sequence belongs to the SIS family. GmhA subfamily. Homotetramer. Zn(2+) serves as cofactor.

The protein localises to the cytoplasm. The catalysed reaction is 2 D-sedoheptulose 7-phosphate = D-glycero-alpha-D-manno-heptose 7-phosphate + D-glycero-beta-D-manno-heptose 7-phosphate. The protein operates within carbohydrate biosynthesis; D-glycero-D-manno-heptose 7-phosphate biosynthesis; D-glycero-alpha-D-manno-heptose 7-phosphate and D-glycero-beta-D-manno-heptose 7-phosphate from sedoheptulose 7-phosphate: step 1/1. Catalyzes the isomerization of sedoheptulose 7-phosphate in D-glycero-D-manno-heptose 7-phosphate. In Proteus mirabilis (strain HI4320), this protein is Phosphoheptose isomerase.